We begin with the raw amino-acid sequence, 190 residues long: Nuclear transcription factor Y subunit A-7 (190 aa).

The segment at 1–33 (MTSSIHELSDNIGSHEKQEQRDSHFQPPIPSAR) is disordered. The segment covering 7-24 (ELSDNIGSHEKQEQRDSH) has biased composition (basic and acidic residues). Positions 103–126 (FVNAKQYHGILRRRQSRARLESQN) match the Subunit association domain (SAD) motif. Positions 133–158 (KPYLHESRHLHAIRRPRGCGGRFLNA) form a DNA-binding region, NFYA/HAP2-type. The tract at residues 147-190 (RPRGCGGRFLNAKKEDEHHEDSSHEEKSNLSAGKSAMAASSGTS) is disordered. A compositionally biased stretch (basic and acidic residues) spans 158–174 (AKKEDEHHEDSSHEEKS). A compositionally biased stretch (low complexity) spans 177–190 (SAGKSAMAASSGTS).

The protein belongs to the NFYA/HAP2 subunit family. Heterotrimeric transcription factor composed of three components, NF-YA, NF-YB and NF-YC. NF-YB and NF-YC must interact and dimerize for NF-YA association and DNA binding.

It is found in the nucleus. In terms of biological role, stimulates the transcription of various genes by recognizing and binding to a CCAAT motif in promoters. The protein is Nuclear transcription factor Y subunit A-7 (NFYA7) of Arabidopsis thaliana (Mouse-ear cress).